The chain runs to 369 residues: MGLFLYLLFMIVVGAFIGGMTNSLAIKMLFRPYRPIYIAGKRLPFTPGLIPKRREELAEQLGRMVVEHLLTAEGLRRKLNDPSFVQDMTSYVQEEVEKWLQSDRTVEQWLKQFGMPDPKQTAETWIETKYKTFMSQYRQRPLHEIIPIDVLHKIDHAIPSIVDRLLLRLRTYIESEQGERQIEHMINEFLQSRGMFGNMLQMFLGNVSLAEKIRPEIVKFLQSEGAKQLLVQLFINEWEKVKEMRIHEVEQIIDQEKIVVWVKRLTASIVQEPLQKPLGALVAPYVRHSLPTLVRFLLQFASERIERWMKQLHLQDIVREEVASFSVERLEEMILTISRREFKMITYLGALLGGIIGLIQGCITFFVQM.

Transmembrane regions (helical) follow at residues Met-1–Thr-21 and Tyr-347–Val-367.

This sequence belongs to the UPF0754 family.

It localises to the cell membrane. In Anoxybacillus flavithermus (strain DSM 21510 / WK1), this protein is UPF0754 membrane protein Aflv_2299.